The primary structure comprises 327 residues: NF-kappa-B inhibitor delta (327 aa).

The tract at residues 1 to 40 (MEDSLDTRLYPEPSLSQVGSWRVSSLPSGSPQLPSPTGPS) is disordered. The segment covering 14–23 (SLSQVGSWRV) has biased composition (polar residues). 6 ANK repeats span residues 62–97 (EGDT…IREH), 98–127 (KGKT…EPNA), 131–160 (QGRS…QVDL), 166–215 (EGLT…SHTS), 220–250 (SNKT…DLRA), and 257–290 (HGNT…DPTL). The interval 293–327 (LENEQPVHLLRPGPGPEGLRQLLKRSRTAPPGLSS) is disordered.

This sequence belongs to the NF-kappa-B inhibitor family. As to quaternary structure, interacts with NFKB1, RELA and RELB; in the nucleus. As to expression, specifically expressed in spleen and at low levels in thymus. Expressed in a population of antigen-presenting dendritic cells which may act as regulators of systemic inflammatory response.

It localises to the nucleus. In terms of biological role, regulates the expression of IL-2, IL-6, and other cytokines through regulation on NF-kappa-B activity. Functions in the regulation of inflammatory responses. Involved in the induction of T helper 17 cells (Th17) differentiation upon recognition of antigen by T cell antigen receptor (TCR). According to PubMed:11931770, it may also regulate TCR-induced negative selection of thymocytes. This is NF-kappa-B inhibitor delta (Nfkbid) from Mus musculus (Mouse).